We begin with the raw amino-acid sequence, 65 residues long: Large ribosomal subunit protein bL35 (65 aa).

The segment at 1–29 (MPKMKTHSGAKKRFKLTGSGKVKRQQANR) is disordered.

The protein belongs to the bacterial ribosomal protein bL35 family.

The chain is Large ribosomal subunit protein bL35 from Kocuria rhizophila (strain ATCC 9341 / DSM 348 / NBRC 103217 / DC2201).